The chain runs to 336 residues: CASP-like protein UU1 (336 aa).

Over 1-170 the chain is Cytoplasmic; the sequence is MGKGPGLDPS…PAMESNKDDN (170 aa). The helical transmembrane segment at 171-191 threads the bilayer; it reads FFGAIVLSLRAAQIVFTVVGL. Over 192-222 the chain is Extracellular; sequence GVMGSLKHTSHGDYYYYYYDFSFTQVDSYIG. Residues 223-243 form a helical membrane-spanning segment; it reads VLSLDVIVCLYAIVQLVLCFI. At 244-261 the chain is on the cytoplasmic side; sequence QRSNQGKYLSSPTTVAAK. Residues 262–282 traverse the membrane as a helical segment; sequence LTFVFDQVLAYALVATAGAAA. Over 283–307 the chain is Extracellular; that stretch reads GSALEIRKGTSCSGTWTVICSKGEA. A helical membrane pass occupies residues 308 to 328; it reads SVAMSFFAFAFLAATAAVYSV. Over 329–336 the chain is Cytoplasmic; sequence RLLRITGR.

The protein belongs to the Casparian strip membrane proteins (CASP) family. Homodimer and heterodimers.

It is found in the cell membrane. This Physcomitrium patens (Spreading-leaved earth moss) protein is CASP-like protein UU1.